The chain runs to 214 residues: MAGKGLFITLEGGEGAGKSTQARLLAEALRAEGHKVLLTREPGGTPGAEEIRNLLLFGKVDLSWRAEILMHMAARSDHLDNAILPALERGEIVVCDRFHDSTLAYQGYGIGQGAPEVLAFLNGARKLVDFEPDLTLMLELPRPQALARLKARGGQTDRYEAQAEAFHERVLAGFDAIASADPVRVKRVDAGQTPEAVSAALLQAVHESLTVQGV.

Residue 12–19 (GGEGAGKS) participates in ATP binding.

Belongs to the thymidylate kinase family.

It carries out the reaction dTMP + ATP = dTDP + ADP. Functionally, phosphorylation of dTMP to form dTDP in both de novo and salvage pathways of dTTP synthesis. The protein is Thymidylate kinase of Gluconobacter oxydans (strain 621H) (Gluconobacter suboxydans).